Consider the following 156-residue polypeptide: Ribonuclease pancreatic (156 aa).

The first 28 residues, 1-28 (MALEKSLVLLPLLVLILLVLGWVQPSLG), serve as a signal peptide directing secretion. Residues 33 to 43 (AKKFQRQHVDS) show a composition bias toward basic and acidic residues. Positions 33–53 (AKKFQRQHVDSDSSPSSSSTY) are disordered. Positions 35 and 38 each coordinate substrate. Residue His40 is the Proton acceptor of the active site. 4 disulfide bridges follow: Cys54/Cys112, Cys68/Cys123, Cys86/Cys138, and Cys93/Cys100. The N-linked (GlcNAc...) asparagine glycan is linked to Asn62. Residues 69 to 73 (KPVNT) and Lys94 each bind substrate. N-linked (GlcNAc...) asparagine glycosylation is present at Asn104. Residue Arg113 coordinates substrate. Residue Asn116 is glycosylated (N-linked (GlcNAc...) asparagine). Catalysis depends on His147, which acts as the Proton donor.

It belongs to the pancreatic ribonuclease family. In terms of assembly, monomer. Interacts with and forms tight 1:1 complexes with RNH1. Dimerization of two such complexes may occur. Interaction with RNH1 inhibits this protein. As to expression, pancreas and other tissues and body fluids (indicating it may have other physiological functions besides its role in digestion).

It is found in the secreted. It catalyses the reaction an [RNA] containing cytidine + H2O = an [RNA]-3'-cytidine-3'-phosphate + a 5'-hydroxy-ribonucleotide-3'-[RNA].. It carries out the reaction an [RNA] containing uridine + H2O = an [RNA]-3'-uridine-3'-phosphate + a 5'-hydroxy-ribonucleotide-3'-[RNA].. Endonuclease that catalyzes the cleavage of RNA on the 3' side of pyrimidine nucleotides. Acts on single-stranded and double-stranded RNA. This chain is Ribonuclease pancreatic (RNASE1), found in Pan troglodytes (Chimpanzee).